The following is a 382-amino-acid chain: 8-amino-7-oxononanoate synthase (382 aa).

The substrate site is built by R22 and R29. 109–110 is a binding site for pyridoxal 5'-phosphate; sequence GF. A substrate-binding site is contributed by H134. Residues S182, 207–210, and 233–236 contribute to the pyridoxal 5'-phosphate site; these read DDAH and TLSK. An N6-(pyridoxal phosphate)lysine modification is found at K236. T345 contributes to the substrate binding site.

The protein belongs to the class-II pyridoxal-phosphate-dependent aminotransferase family. BioF subfamily. As to quaternary structure, homodimer. Pyridoxal 5'-phosphate serves as cofactor.

The catalysed reaction is 6-carboxyhexanoyl-[ACP] + L-alanine + H(+) = (8S)-8-amino-7-oxononanoate + holo-[ACP] + CO2. Its pathway is cofactor biosynthesis; biotin biosynthesis. Catalyzes the decarboxylative condensation of pimeloyl-[acyl-carrier protein] and L-alanine to produce 8-amino-7-oxononanoate (AON), [acyl-carrier protein], and carbon dioxide. The protein is 8-amino-7-oxononanoate synthase of Granulibacter bethesdensis (strain ATCC BAA-1260 / CGDNIH1).